Here is a 612-residue protein sequence, read N- to C-terminus: Lipoma-preferred partner (612 aa).

Disordered regions lie at residues 1–118 (MSHP…SSLD) and 132–219 (ECSS…SSRP). Residues 26-40 (THSFGNPSISVSTQQ) show a composition bias toward polar residues. A compositionally biased stretch (low complexity) spans 41–53 (PPKKFAPVVAPKP). Position 108 is an N6-acetyllysine (K108). S116 and S151 each carry phosphoserine. 2 stretches are compositionally biased toward polar residues: residues 143-158 (QSSTGSTASPPVSTPV) and 171-181 (PLTATKKSTLK). Positions 183–193 (QPAPQAGPIPV) are enriched in pro residues. The segment covering 209–219 (SYTTASTSSRP) has biased composition (polar residues). Residues Y244 and Y301 each carry the phosphotyrosine modification. A disordered region spans residues 307–387 (YGGRNDSDPT…LGPSSVAPSF (81 aa)). A compositionally biased stretch (polar residues) spans 314–323 (DPTYGQQGHP). Residue K327 forms a Glycyl lysine isopeptide (Lys-Gly) (interchain with G-Cter in SUMO1) linkage. T333 is subject to Phosphothreonine. Position 375 is a phosphoserine (S375). 3 LIM zinc-binding domains span residues 414–473 (GRCA…INTL), 474–534 (EQCN…KFAP), and 535–603 (RCSV…RIRV).

The protein belongs to the zyxin/ajuba family. Interacts with VASP, with PDZ domains of SCRIB and with ACTN1/alpha-actinin. As to expression, expressed in a wide variety of tissues but no or very low expression in brain and peripheral leukocytes.

It is found in the nucleus. The protein resides in the cytoplasm. It localises to the cell junction. Its subcellular location is the cell membrane. In terms of biological role, may play a structural role at sites of cell adhesion in maintaining cell shape and motility. In addition to these structural functions, it may also be implicated in signaling events and activation of gene transcription. May be involved in signal transduction from cell adhesion sites to the nucleus allowing successful integration of signals arising from soluble factors and cell-cell adhesion sites. Also suggested to serve as a scaffold protein upon which distinct protein complexes are assembled in the cytoplasm and in the nucleus. The protein is Lipoma-preferred partner (LPP) of Homo sapiens (Human).